Consider the following 155-residue polypeptide: Histone H2B.4 (155 aa).

A compositionally biased stretch (basic and acidic residues) spans 1–28 (MAPKTKEEKPASEAVEPKAEAKPKAEKA). Residues 1–62 (MAPKTKEEKP…GDKKKKKAKV (62 aa)) form a disordered region. Over residues 29-40 (PKKKEKKAPAKK) the composition is skewed to basic residues. Residue lysine 151 forms a Glycyl lysine isopeptide (Lys-Gly) (interchain with G-Cter in ubiquitin) linkage.

The protein belongs to the histone H2B family. As to quaternary structure, the nucleosome is a histone octamer containing two molecules each of H2A, H2B, H3 and H4 assembled in one H3-H4 heterotetramer and two H2A-H2B heterodimers. The octamer wraps approximately 147 bp of DNA. Post-translationally, monoubiquitinated to form H2BK143ub1; may give a specific tag for epigenetic transcriptional activation.

It is found in the nucleus. The protein resides in the chromosome. Core component of nucleosome. Nucleosomes wrap and compact DNA into chromatin, limiting DNA accessibility to the cellular machineries which require DNA as a template. Histones thereby play a central role in transcription regulation, DNA repair, DNA replication and chromosomal stability. DNA accessibility is regulated via a complex set of post-translational modifications of histones, also called histone code, and nucleosome remodeling. In Volvox carteri (Green alga), this protein is Histone H2B.4.